A 479-amino-acid polypeptide reads, in one-letter code: MGKILKSKSSWPRTVVRKWLNLRSGAYEFHSDYPVKGMEPRRKSCSDMIVPENFQGWLGQGNGDLKHSTGEQHVTRVDDKLDLKMFVGTWNVGGKSPHEGLDLKDWLKSPADADIYVLGFQEIVPLNAGNVLGAEDNGPAAKWLSLIREALNNTNNLSPNELEHTKSSQQPRFSFSGLSDDTPIPCNSTPPRGYSLAASKQMVGIFLCVWVRDDLRKRITNLKVSCVGRGIMGYLGNKGSVSISMSLHETSLCFVCTHLTSGEKEGDELRRNLDVTEIFKRTRFSRSSKDSRPETIMDHDKVIWLGDLNYRLRASSDLHEQLRNHDWESLLEKDQLKIEQRAGRIFKGWEEGKIYFAPTYKYRINSDNYVVQTEKSKEKRRTPAWCDRILWKGDGMKQLWYVRGESKFSDHRPVQSLFSVHIDLKNQSNRKTKPVNQNHRPNPVLTYTCHGKVQAEEILLLTRAQSCIDTLPRLISSAS.

Catalytic regions lie at residues 300 to 315 (DKVI…LRAS) and 379 to 394 (KRRT…WKGD).

It belongs to the inositol polyphosphate 5-phosphatase family.

The chain is Type I inositol polyphosphate 5-phosphatase 8 from Arabidopsis thaliana (Mouse-ear cress).